The following is a 436-amino-acid chain: STITKVHARQIFDSRGNPTVEVEVTTDKGVFRAGVPSGASTGVHEALELRDGVKSDYLGKGVLKAVGNVNTIINEELVKANLSVVDQKAVDDFLIQLDGTENKEKLGANAILGVSLAVAKAGAAEKGVPFYVHIADLAGSKKPFVLPVPAFNVINGGSHAGNKLAMQEFMIMPTGAKSFSEAMKLGSEVYHTLKKVINEKYGQDATNVGDEGGFAPNIQDNQEGLELLVTAIEKAGYTGKIKVAMDCAASDFYKDGKYDLDFKNPNSDPSTYLTGQDLTDLYNSYAGKYPIVSIEDAFDQDDWENWAHMNASADYQLVGDDLTVTNPKRIATAVEKKACNALLLKVNQIGTLTESIQAALDSQKAGWGVMVSHRSGETEDTSIASIVVGLRTGQIKTGAPCRSERLAKYNELLRIEEELGDAAIYAGEHFRKAHDL.

The substrate site is built by His159 and Glu168. Glu211 acts as the Proton donor in catalysis. Mg(2+) contacts are provided by Asp246, Glu295, and Asp320. Substrate contacts are provided by Glu295 and Asp320. The Proton acceptor role is filled by Lys345. Residues 372–375 (SHRS) and Lys396 each bind substrate.

This sequence belongs to the enolase family. In terms of assembly, homodimer. Mg(2+) is required as a cofactor.

The protein resides in the cytoplasm. It carries out the reaction (2R)-2-phosphoglycerate = phosphoenolpyruvate + H2O. It functions in the pathway carbohydrate degradation; glycolysis; pyruvate from D-glyceraldehyde 3-phosphate: step 4/5. This chain is Enolase, found in Cunninghamella elegans.